The sequence spans 315 residues: Protein OPG185 (315 aa).

Residues 1–16 (MTRLPILLLLISLVYA) form the signal peptide. The region spanning 17-121 (TPFPQTSKKI…NDTDKVDYEE (105 aa)) is the Ig-like V-type domain. The Virion surface portion of the chain corresponds to 17–279 (TPFPQTSKKI…SNYKTKDFVE (263 aa)). An intrachain disulfide couples Cys34 to Cys103. Asn37, Asn69, Asn112, and Asn161 each carry an N-linked (GlcNAc...) asparagine; by host glycan. Residues 191–202 (SINTVSASSGES) show a composition bias toward polar residues. The interval 191-213 (SINTVSASSGESTTDETPEPITD) is disordered. The N-linked (GlcNAc...) asparagine; by host glycan is linked to Asn254. The chain crosses the membrane as a helical span at residues 280-303 (IFGITALIILSAVAIFCITYYIYN). At 304-315 (KRSRKYKTENKV) the chain is on the intravirion side.

It belongs to the orthopoxvirus OPG185 family. In terms of assembly, heterodimerizes with OPG040. The heterodimer OPG185-OPG040 interacts with components of the entry fusion complex OPG143 and OPG094. Heterodimer with C3/VPC protein; disulfide-linked. In terms of processing, glycosylated; contains phosphate and sulfate-substituted glycans. O-glycosylation is required for hemagglutination and hemadsorption activities of infected cell membranes.

The protein resides in the virion membrane. It is found in the host membrane. Its function is as follows. Prevents cell to cell fusion by interacting with and directing the viral OPG040 protein on the host plasma membrane. The OPG185-OPG040 complex associates with components of the entry fusion complex (EFC) presumably to avoid superinfection and syncytium formation. Via its interaction with C3/VCP protein, protects the infected cell and probably also the extracellular enveloped virus from complement attack. The sequence is that of Protein OPG185 (OPG185) from Homo sapiens (Human).